The chain runs to 629 residues: 1-deoxy-D-xylulose-5-phosphate synthase (629 aa).

Thiamine diphosphate-binding positions include histidine 79 and 119-121; that span reads SHA. Aspartate 150 is a Mg(2+) binding site. Residues 151 to 152, asparagine 180, tyrosine 292, and glutamate 377 contribute to the thiamine diphosphate site; that span reads GS. Asparagine 180 lines the Mg(2+) pocket.

It belongs to the transketolase family. DXPS subfamily. Homodimer. It depends on Mg(2+) as a cofactor. Requires thiamine diphosphate as cofactor.

The catalysed reaction is D-glyceraldehyde 3-phosphate + pyruvate + H(+) = 1-deoxy-D-xylulose 5-phosphate + CO2. It participates in metabolic intermediate biosynthesis; 1-deoxy-D-xylulose 5-phosphate biosynthesis; 1-deoxy-D-xylulose 5-phosphate from D-glyceraldehyde 3-phosphate and pyruvate: step 1/1. Its function is as follows. Catalyzes the acyloin condensation reaction between C atoms 2 and 3 of pyruvate and glyceraldehyde 3-phosphate to yield 1-deoxy-D-xylulose-5-phosphate (DXP). This is 1-deoxy-D-xylulose-5-phosphate synthase from Tropheryma whipplei (strain TW08/27) (Whipple's bacillus).